A 683-amino-acid chain; its full sequence is U4/U6 small nuclear ribonucleoprotein Prp3 (683 aa).

The 87-residue stretch at 1-87 (MALSKRELDE…HSKSSSDRSR (87 aa)) folds into the PWI domain. Residues 73-107 (GRSSRHSKSSSDRSRKRDLKEVFGDDSEISKESSG) are compositionally biased toward basic and acidic residues. Residues 73 to 135 (GRSSRHSKSS…IPGPPSESPG (63 aa)) form a disordered region. A Glycyl lysine isopeptide (Lys-Gly) (interchain with G-Cter in SUMO2) cross-link involves residue Lys-139. A disordered region spans residues 153-183 (IEERKKQLSFISPPTPQPKTPSSSQPERLPI). At Ser-164 the chain carries Phosphoserine. Thr-167 bears the Phosphothreonine mark. Residues Lys-244 and Lys-252 each participate in a glycyl lysine isopeptide (Lys-Gly) (interchain with G-Cter in SUMO2) cross-link. The segment at 416–550 (NLVEHPAQLN…VHISVYRVRN (135 aa)) is mediates interaction with SART3. Ser-619 is subject to Phosphoserine.

As to quaternary structure, component of the precatalytic spliceosome (spliceosome B complex). Component of the U4/U6-U5 tri-snRNP complex, a building block of the precatalytic spliceosome (spliceosome B complex). The U4/U6-U5 tri-snRNP complex is composed of the U4, U6 and U5 snRNAs and at least PRPF3, PRPF4, PRPF6, PRPF8, PRPF31, SNRNP200, TXNL4A, SNRNP40, SNRPB, SNRPD1, SNRPD2, SNRPD3, SNRPE, SNRPF, SNRPG, DDX23, CD2BP2, PPIH, SNU13, EFTUD2, SART1 and USP39, plus LSM2, LSM3, LSM4, LSM5, LSM6, LSM7 and LSM8. Interacts directly with PRPF4. Part of a heteromeric complex containing PPIH, PRPF3 and PRPF4 that is stable in the absence of RNA. Interacts with SART3; the interaction is direct and recruits the deubiquitinase USP4 to PRPF3. Interacts with PRPF19. Interacts ('Lys-63'-linked polyubiquitinated) with PRPF8 (via the MPN (JAB/Mov34) domain); may stabilize the U4/U6-U5 tri-snRNP complex. Interacts with ERCC6. In terms of processing, ubiquitinated. Undergoes 'Lys-63'-linked polyubiquitination by PRPF19 and deubiquitination by USP4. 'Lys-63'-linked ubiquitination increases the affinity for PRPF8 and may regulate the assembly of the U4/U6-U5 tri-snRNP complex.

The protein localises to the nucleus. The protein resides in the nucleus speckle. In terms of biological role, plays a role in pre-mRNA splicing as component of the U4/U6-U5 tri-snRNP complex that is involved in spliceosome assembly, and as component of the precatalytic spliceosome (spliceosome B complex). The chain is U4/U6 small nuclear ribonucleoprotein Prp3 (PRPF3) from Bos taurus (Bovine).